The following is a 112-amino-acid chain: Transmembrane protein 14 homolog (112 aa).

Residues 3–23 (VDWFGYVYAATVAAGGIMGYA) form a helical membrane-spanning segment.

This sequence belongs to the TMEM14 family.

It localises to the membrane. The chain is Transmembrane protein 14 homolog from Drosophila melanogaster (Fruit fly).